A 317-amino-acid chain; its full sequence is Protease HtpX homolog (317 aa).

2 helical membrane passes run 14-34 (LMGIAIFAIGFGIIYAILYYI) and 41-61 (IALLMVLLPIFIIMDIVQWLF). Histidine 146 provides a ligand contact to Zn(2+). Residue glutamate 147 is part of the active site. Histidine 150 is a binding site for Zn(2+). 2 helical membrane passes run 158–178 (MLLAIGLIPTLIFYFGYTLLF) and 189–209 (IVLLAIIAMAASFLFRFLILA). Position 215 (glutamate 215) interacts with Zn(2+).

Belongs to the peptidase M48B family. The cofactor is Zn(2+).

Its subcellular location is the cell membrane. This is Protease HtpX homolog from Thermoplasma acidophilum (strain ATCC 25905 / DSM 1728 / JCM 9062 / NBRC 15155 / AMRC-C165).